The primary structure comprises 149 residues: Putative pre-16S rRNA nuclease (149 aa).

Belongs to the YqgF nuclease family.

Its subcellular location is the cytoplasm. In terms of biological role, could be a nuclease involved in processing of the 5'-end of pre-16S rRNA. The protein is Putative pre-16S rRNA nuclease of Burkholderia vietnamiensis (strain G4 / LMG 22486) (Burkholderia cepacia (strain R1808)).